A 428-amino-acid chain; its full sequence is Enolase (428 aa).

Position 163 (Gln-163) interacts with (2R)-2-phosphoglycerate. Catalysis depends on Glu-205, which acts as the Proton donor. Mg(2+) is bound by residues Asp-242, Glu-285, and Asp-311. Positions 336, 365, 366, and 387 each coordinate (2R)-2-phosphoglycerate. The active-site Proton acceptor is the Lys-336.

The protein belongs to the enolase family. It depends on Mg(2+) as a cofactor.

It localises to the cytoplasm. Its subcellular location is the secreted. The protein resides in the cell surface. It catalyses the reaction (2R)-2-phosphoglycerate = phosphoenolpyruvate + H2O. It participates in carbohydrate degradation; glycolysis; pyruvate from D-glyceraldehyde 3-phosphate: step 4/5. In terms of biological role, catalyzes the reversible conversion of 2-phosphoglycerate (2-PG) into phosphoenolpyruvate (PEP). It is essential for the degradation of carbohydrates via glycolysis. The sequence is that of Enolase from Desulfatibacillum aliphaticivorans.